The primary structure comprises 660 residues: Solute carrier family 5 member 4B (660 aa).

At 1–27 (MASTLSPSITPQTEEPPVVPVRIQNAA) the chain is on the cytoplasmic side. The chain crosses the membrane as a helical span at residues 28 to 48 (DISVIVIYFIVVLAVGLWSMV). Over 49 to 54 (RSNRGT) the chain is Extracellular. The chain crosses the membrane as a helical span at residues 55-75 (VGGFFLAGHDMAWWPMGASLF). The Cytoplasmic portion of the chain corresponds to 76–82 (ASNIGSN). A helical membrane pass occupies residues 83 to 103 (HFVGLAGTGAASGIAIAAVEW). Topologically, residues 104 to 105 (NA) are extracellular. The chain crosses the membrane as a helical span at residues 106–126 (LLMVLVLGWVFLPIYIKAGVL). Over 127 to 142 (TMPEYLRKRFGGKRLQ) the chain is Cytoplasmic. A helical transmembrane segment spans residues 143 to 163 (IYLSVLSLFIMVALQTSSIIF). At 164–166 (SGA) the chain is on the extracellular side. The chain crosses the membrane as a helical span at residues 167–187 (IFIQLALGLNLYLAVFILLAI). The Cytoplasmic portion of the chain corresponds to 188 to 208 (TAFYTVAGGLASVIYTDSVQT). A helical membrane pass occupies residues 209-229 (FIMLLGSLILMGFAFAEVGGY). The Extracellular portion of the chain corresponds to 230-277 (ESFTEKYMNAIPSVVEGDNLTISPKCYTPQPDSFHVFRDPVTGDIPWP). A helical transmembrane segment spans residues 278-298 (GLIFGMTILAIWYWCADQVIV). At 299 to 313 (QRCLCGKNMSHVKAA) the chain is on the cytoplasmic side. The chain crosses the membrane as a helical span at residues 314–334 (CILCGYLKLLPMFLMVMPGMI). Topologically, residues 335 to 380 (SRILYTDKVACVVPSECEKQCGTAVGCTNYAYPTLVLELMPDGLRG) are extracellular. A helical membrane pass occupies residues 381 to 401 (LMLSVMLASLMSSLTSIFNSA). Topologically, residues 402–423 (STLFTIDLYTKIRKKASERELM) are cytoplasmic. The helical transmembrane segment at 424 to 444 (IAGRIFGMVLIAVSILWVPLV) threads the bilayer. The Extracellular segment spans residues 445–455 (QVSQNGQLFHY). A helical transmembrane segment spans residues 456-476 (IGSVSSYLGPPLGAVFMLAIF). Topologically, residues 477–484 (FKRVNEQG) are cytoplasmic. A helical membrane pass occupies residues 485 to 505 (AFWGLMVGLVVGLIRLIAEFV). Over 506 to 526 (YGTGSCVAPSNCPKIICGVHY) the chain is Extracellular. Residues 527 to 547 (MYFAIILFFVSIIVILGVSFL) form a helical membrane-spanning segment. Over 548-639 (TEPIPDVHLY…DTSEKPLWRT (92 aa)) the chain is Cytoplasmic. The helical transmembrane segment at 640–660 (VMNINAVLLLGVAVFVHAYFA) threads the bilayer.

Belongs to the sodium:solute symporter (SSF) (TC 2.A.21) family. In terms of tissue distribution, expressed in small intestine. Expressed in kidney.

The protein localises to the cell membrane. The enzyme catalyses D-glucose(out) + 2 Na(+)(out) = D-glucose(in) + 2 Na(+)(in). Inhibited by phlorizin. Low-affinity sodium/D-glucose symporter. Generates D-glucose-induced depolarization in a pH-independent manner. This chain is Solute carrier family 5 member 4B, found in Mus musculus (Mouse).